A 1091-amino-acid polypeptide reads, in one-letter code: Rho GTPase-activating protein 7 (1091 aa).

Residues L11–E78 enclose the SAM domain. A phosphoserine mark is found at S86, S89, and S129. Disordered stretches follow at residues S120–R181, R296–L329, R402–M439, and S491–G552. Polar residues predominate over residues P130–S143. Low complexity-rich tracts occupy residues S155–S166 and V298–T324. The interval Q274–G447 is focal adhesion-targeting (FAT). Phosphoserine is present on S321. The segment covering L414–E425 has biased composition (basic and acidic residues). The span at A499–K511 shows a compositional bias: polar residues. Over residues I513–S525 the composition is skewed to basic and acidic residues. Residues D526 to N535 show a composition bias toward polar residues. Positions K614–R636 are polybasic cluster (PBR). One can recognise a Rho-GAP domain in the interval V641 to F847. Residues S877–E1084 form the START domain.

Interacts with EF1A1, facilitates EF1A1 distribution to the membrane periphery and ruffles upon growth factor stimulation and suppresses cell migration. Interacts with tensin TNS1 (via N-terminus); the interaction is decreased by phosphorylation of TNS1. Interacts with TNS3 and PTEN; in resting cells, interacts with TNS3 (via C2 tensin-type domain) but, following growth factor stimulation, TNS3 and PTEN are phosphorylated which leads to weakened interaction with TNS3 and enhanced interaction with PTEN. Interacts (via C-terminus) with tensin TNS4 (via SH2 domain); the interaction is independent of tyrosine phosphorylation of DLC1.

The protein resides in the cytoplasm. Its subcellular location is the cell junction. It is found in the focal adhesion. The protein localises to the membrane. In terms of biological role, functions as a GTPase-activating protein for the small GTPases RHOA, RHOB, RHOC and CDC42, terminating their downstream signaling. This induces morphological changes and detachment through cytoskeletal reorganization, playing a critical role in biological processes such as cell migration and proliferation. Also functions in vivo as an activator of the phospholipase PLCD1. Active DLC1 increases cell migration velocity but reduces directionality. Required for growth factor-induced epithelial cell migration; in resting cells, interacts with TNS3 while PTEN interacts with the p85 regulatory subunit of the PI3K kinase complex but growth factor stimulation induces phosphorylation of TNS3 and PTEN, causing them to change their binding preference so that PTEN interacts with DLC1 and TNS3 interacts with p85. The PTEN-DLC1 complex translocates to the posterior of migrating cells to activate RHOA while the TNS3-p85 complex translocates to the leading edge of migrating cells to promote RAC1 activation. The protein is Rho GTPase-activating protein 7 (Dlc1) of Rattus norvegicus (Rat).